The sequence spans 418 residues: Metal tolerance protein 1 (418 aa).

Residues Met-1–Arg-56 are Cytoplasmic-facing. Residues Lys-57–Ile-77 traverse the membrane as a helical segment. Over Lys-78–Ala-89 the chain is Vacuolar. Residues His-90–Trp-110 traverse the membrane as a helical segment. Residues Glu-111–Arg-122 are Cytoplasmic-facing. A helical membrane pass occupies residues Ile-123 to Val-143. Over Tyr-144 to Ser-160 the chain is Vacuolar. Residues Leu-161–Gly-181 form a helical membrane-spanning segment. The tract at residues His-182 to His-246 is required for zinc-binding. Residues His-182 to Tyr-282 lie on the Cytoplasmic side of the membrane. The disordered stretch occupies residues His-186–Ala-248. The segment covering His-196 to His-227 has biased composition (basic and acidic residues). Basic residues predominate over residues Leu-235–His-245. A helical transmembrane segment spans residues Leu-283–Trp-303. At Tyr-304–Glu-307 the chain is on the vacuolar side. A helical membrane pass occupies residues Trp-308–Ile-328. Residues Lys-329–Glu-418 are Cytoplasmic-facing.

This sequence belongs to the cation diffusion facilitator (CDF) transporter (TC 2.A.4) family. SLC30A subfamily.

The protein localises to the vacuole membrane. In terms of biological role, involved in sequestration of excess zinc in the cytoplasm into vacuoles to maintain zinc homeostasis. The sequence is that of Metal tolerance protein 1 (MTP1) from Oryza sativa subsp. japonica (Rice).